The chain runs to 466 residues: MSKLRVRFAPSPTGYLHIGGARTALFNFLLARKEQGTFVLRIEDTDVARSTQESVDAILQAMDWLGMSCDEGPIYQSDRFDLYRAKIDQLVEQGKAYRCYCTAEELEKKREAAMQDGRKPKYDGTCRQLQEVCDDKPYVIRFKAPQEGATTFHDRIKGDITFQNEELDDLIIQRTDGTPTYNFVVVVDDAEMGINLVLRGDDHINNTPRQIMLYKALGYPVPDFAHVPMILGADKSRLSKRHGATSVMAYKEMGYLPEALVNYLVRLGWSHGDQEIFTQDELTQLFSLDNIGKSASVFNPEKLIWLNSHYIKTGNPGRLAQLLAGHLAADGIDVANIADLEPIVVALQDRSKTLVDMAQQARCFFADDIQFDEKAAAKFLIEDNRFVFEALSAALESCDDWKEDILDGVFKGVLEATGLKFGKLAQPARVALVGGTTGPSICLIMQILGREKTLARLQGAMSRLGQ.

Positions 10 to 20 (PSPTGYLHIGG) match the 'HIGH' region motif. The short motif at 237 to 241 (RLSKR) is the 'KMSKS' region element. Lys-240 serves as a coordination point for ATP.

This sequence belongs to the class-I aminoacyl-tRNA synthetase family. Glutamate--tRNA ligase type 1 subfamily. As to quaternary structure, monomer.

Its subcellular location is the cytoplasm. The enzyme catalyses tRNA(Glu) + L-glutamate + ATP = L-glutamyl-tRNA(Glu) + AMP + diphosphate. Its function is as follows. Catalyzes the attachment of glutamate to tRNA(Glu) in a two-step reaction: glutamate is first activated by ATP to form Glu-AMP and then transferred to the acceptor end of tRNA(Glu). The protein is Glutamate--tRNA ligase of Syntrophotalea carbinolica (strain DSM 2380 / NBRC 103641 / GraBd1) (Pelobacter carbinolicus).